We begin with the raw amino-acid sequence, 68 residues long: MKEKIHPKYNTATNVICACGNTFTVGSTKDNIKVELCAQCHPFYTGEKRMVDTAGRVEKFRQRYGSKT.

Zn(2+) contacts are provided by Cys17, Cys19, Cys37, and Cys40.

It belongs to the bacterial ribosomal protein bL31 family. Type A subfamily. As to quaternary structure, part of the 50S ribosomal subunit. Requires Zn(2+) as cofactor.

Functionally, binds the 23S rRNA. The polypeptide is Large ribosomal subunit protein bL31 (Dehalococcoides mccartyi (strain CBDB1)).